A 443-amino-acid polypeptide reads, in one-letter code: Zinc finger protein ZIC 1 (443 aa).

The C2H2-type 1; atypical zinc-finger motif lies at 221 to 256 (LICKWIEPEQLANPKKSCNKTFSTMHELVTHVTVEH). The segment at 265–292 (HICVWEECPREGKPFKAKYKLINHIRVH) adopts a C2H2-type 2; atypical zinc-finger fold. C2H2-type zinc fingers lie at residues 298-322 (FPCPFPGCGKVFARSENLKIHKRTH), 328-352 (FKCEFEGCDRRFANSSDRKKHMHVH), and 358-380 (YLCKMCDKSYTHPSSLRKHMKVH). Positions 371 to 433 (SSLRKHMKVH…AVHHTSNHST (63 aa)) are disordered. The segment covering 383-396 (SSQGSQPSPAASSG) has biased composition (low complexity). Over residues 397-413 (YESSTPPTIVSPSAENQ) the composition is skewed to polar residues. Residues 408–443 (PSAENQSTSSLSPSSSAVHHTSNHSTLSSNFNEWYV) are negatively regulates transcriptional activity. A compositionally biased stretch (low complexity) spans 414 to 433 (STSSLSPSSSAVHHTSNHST).

It belongs to the GLI C2H2-type zinc-finger protein family. In terms of tissue distribution, during early gastrula stages, widely expressed in the dorsal ectoderm. At mid-gastrula, expressed throughout the presumptive neural plate and at late gastrula, expression gradually diminishes in the dorsal midline and increases in the anterior folds. By early neurula stage, expression becomes restricted to the lateral edges of the neural plate, corresponding to the presumptive dorsal neural plate and neural crest, and in flanking ectoderm. In early tailbud stages (stages 22-23), expressed in the dorsal forebrain, midbrain and hindbrain. Subsequently expressed in the telencephalon and at the diencephalon/mesencephalon boundary. In the spinal cord, expression is restricted to the dorsal most region including the roof plate. Also expressed in the somites but not in eye vesicles. At larval stages, expressed mainly in the dorsal neural tube throughout its anteroposterior axis.

It is found in the nucleus. The protein resides in the cytoplasm. Its function is as follows. Transcriptional activator that induces expression of multiple genes including pax3, en2, snai2/slug, feb and a subset of wnt genes. Has multiple key roles in the regulation of neural induction and neurogenesis: acts as a neural competence factor, sensitizing the presumptive neuroectoderm to respond to subsequent neuralizing signals. Promotes both preplacodal cell fates and neural crest cell fates, two of the cell populations that arise from the neural plate border. Cooperates with pax3 in concert with wnt signaling to determine neural crest fate. Synergizes with the bmp-inhibitor noggin/nog and acts through the wnt pathway to induce expression of en2. May bind to the minimal GLI-consensus sequence 5'-TGGGTGGTC-3'. The polypeptide is Zinc finger protein ZIC 1 (zic1) (Xenopus laevis (African clawed frog)).